Consider the following 944-residue polypeptide: Nonsense-mediated mRNA decay factor SMG8 (944 aa).

Disordered stretches follow at residues Asn-560–Ala-597 and Gln-628–Asn-653. The span at Gln-568–Gln-583 shows a compositional bias: acidic residues. Residues Gln-628–Asp-650 show a composition bias toward polar residues.

This sequence belongs to the SMG8 family.

Involved in nonsense-mediated decay (NMD) of mRNAs containing premature stop codons. Probable component of kinase complex containing nonC and recruited to stalled ribosomes. The protein is Nonsense-mediated mRNA decay factor SMG8 of Drosophila simulans (Fruit fly).